The primary structure comprises 938 residues: Catenin delta-1 (938 aa).

N-acetylmethionine is present on methionine 1. The necessary and sufficient for interaction with CCDC85B stretch occupies residues 1-357; that stretch reads MDDSEVESTA…ASLDSLRKGM (357 aa). Serine 4 is modified (phosphoserine). A coiled-coil region spans residues 10–46; that stretch reads ASILASVKEQEAQFEKLTRALEEERRHVSAQLERVRV. Serine 47 is subject to Phosphoserine. Phosphothreonine is present on threonine 59. The residue at position 112 (tyrosine 112) is a Phosphotyrosine; by FYN. Residue serine 125 is modified to Phosphoserine. A phosphotyrosine mark is found at tyrosine 217 and tyrosine 221. Phosphoserine is present on serine 225. Tyrosine 228 is modified (phosphotyrosine). 2 positions are modified to phosphoserine: serine 230 and serine 252. A Phosphotyrosine modification is found at tyrosine 257. A phosphoserine mark is found at serine 268 and serine 269. Tyrosine 280 carries the post-translational modification Phosphotyrosine. Residue serine 288 is modified to Phosphoserine. Tyrosine 291 is modified (phosphotyrosine). Position 300 is a phosphoserine (serine 300). A Phosphothreonine modification is found at threonine 304. 4 positions are modified to phosphoserine: serine 320, serine 346, serine 349, and serine 352. ARM repeat units lie at residues 358–395, 398–437, 441–475, and 476–516; these read PPPSNWRQPELPEVIAMLGFRLDAVKSNAAAYLQHLCY, DKVKTDVRKLKGIPILVGLLDHPKKEVHLGACGALKNISF, QDNKIAIKNCDGVPALVRLLRKARDMDLTEVITGT, and LWNL…NEDC. Lysine 421 is covalently cross-linked (Glycyl lysine isopeptide (Lys-Gly) (interchain with G-Cter in SUMO2)). Lysine 517 is covalently cross-linked (Glycyl lysine isopeptide (Lys-Gly) (interchain with G-Cter in SUMO2)). 6 ARM repeats span residues 534 to 573, 583 to 624, 653 to 693, 700 to 739, 740 to 780, and 781 to 826; these read LRNVSSERSEARRKLRECDGLVDALIFIVQAEIGQKDSDS, LRNL…AKKG, ARGY…NLCA, RYIRSALRQEKALSAIAELLTSEHERVVKAASGALRNLAV, DARN…SILN, and TINE…ALVL. Residue serine 617 is modified to Phosphoserine. Residues 622–629 carry the Nuclear localization signal (NLS) motif; that stretch reads KKGKDEWF. At serine 713 the chain carries Phosphoserine. A phosphoserine mark is found at serine 811, serine 847, serine 857, serine 859, serine 861, and serine 864. The disordered stretch occupies residues 855–938; it reads NASRSQSSHS…LKGAPLMQKI (84 aa). Tyrosine 865 carries the phosphotyrosine modification. The residue at position 868 (serine 868) is a Phosphoserine. The residue at position 869 (threonine 869) is a Phosphothreonine. The segment covering 875–888 has biased composition (basic and acidic residues); sequence RNQKSDKKPDREEI. Position 879 is a phosphoserine (serine 879). A Glycyl lysine isopeptide (Lys-Gly) (interchain with G-Cter in SUMO2) cross-link involves residue lysine 882. Residues 892–908 show a composition bias toward polar residues; it reads NMGSNTKSLDNNYSTLN. Serine 899 is subject to Phosphoserine. At tyrosine 904 the chain carries Phosphotyrosine. Phosphothreonine occurs at positions 906 and 916. The span at 909 to 922 shows a compositional bias: basic and acidic residues; that stretch reads ERGDHNRTLDRSGD. Residue serine 920 is modified to Phosphoserine.

This sequence belongs to the beta-catenin family. In terms of assembly, belongs to a multiprotein cell-cell adhesion complex that also contains E-cadherin/CDH1, alpha-catenin/CTNNA1, beta-catenin/CTNNB1, and gamma-catenin/JUP. Binds to the C-terminal fragment of PSEN1 and mutually competes for CDH1. Interacts with ZBTB33. Interacts with GLIS2. Interacts with FER. Interacts with NANOS1 (via N-terminal region). Interacts (via N-terminus) with GNA12; the interaction regulates CDH1-mediated cell-cell adhesion. Interacts with GNA13. Component of a cadherin:catenin adhesion complex composed of at least of CDH26, beta-catenin/CTNNB1, alpha-catenin/CTNNA1 and p120 catenin/CTNND1. Interacts with CCDC85B. Interacts with PLPP3; negatively regulates the PLPP3-mediated stabilization of CTNNB1. Interacts with DSG3; the interaction facilitates DSG3 localization and retention at cell-cell junctions. Interacts with CTNND1/p120-catenin; the interaction controls CADH5 endocytosis. Post-translationally, phosphorylated by FER and other protein-tyrosine kinases. Phosphorylated at Ser-288 by PAK5. Dephosphorylated by PTPRJ. As to expression, expressed in basal keratinocytes (at protein level).

The protein resides in the cell junction. Its subcellular location is the adherens junction. It localises to the cytoplasm. It is found in the nucleus. The protein localises to the cell membrane. Functionally, key regulator of cell-cell adhesion that associates with and regulates the cell adhesion properties of both C-, E- and N-cadherins, being critical for their surface stability. Promotes localization and retention of DSG3 at cell-cell junctions, via its interaction with DSG3. Beside cell-cell adhesion, regulates gene transcription through several transcription factors including ZBTB33/Kaiso2 and GLIS2, and the activity of Rho family GTPases and downstream cytoskeletal dynamics. Implicated both in cell transformation by SRC and in ligand-induced receptor signaling through the EGF, PDGF, CSF-1 and ERBB2 receptors. The chain is Catenin delta-1 (Ctnnd1) from Mus musculus (Mouse).